The chain runs to 1247 residues: Respiratory nitrate reductase 1 alpha chain (1247 aa).

A 4Fe-4S Mo/W bis-MGD-type domain is found at 43–107; sequence DKIVRSTHGV…SYSWYLYSAN (65 aa). [4Fe-4S] cluster contacts are provided by His50, Cys54, Cys58, and Cys93. Asp223 serves as a coordination point for Mo-bis(molybdopterin guanine dinucleotide).

The protein belongs to the prokaryotic molybdopterin-containing oxidoreductase family. As to quaternary structure, dimer of heterotrimers each composed of an alpha, a beta and a gamma chain. Alpha and beta are catalytic chains; gamma chains are involved in binding the enzyme complex to the cytoplasmic membrane. Interacts with the NarJ chaperone. [4Fe-4S] cluster serves as cofactor. It depends on Mo-bis(molybdopterin guanine dinucleotide) as a cofactor.

It localises to the cell membrane. It catalyses the reaction nitrate + a quinol = a quinone + nitrite + H2O. In terms of biological role, the nitrate reductase enzyme complex allows E.coli to use nitrate as an electron acceptor during anaerobic growth. The alpha chain is the actual site of nitrate reduction. This chain is Respiratory nitrate reductase 1 alpha chain (narG), found in Escherichia coli (strain K12).